Consider the following 151-residue polypeptide: Large ribosomal subunit protein bL9 (151 aa).

Belongs to the bacterial ribosomal protein bL9 family.

Binds to the 23S rRNA. In Pelodictyon phaeoclathratiforme (strain DSM 5477 / BU-1), this protein is Large ribosomal subunit protein bL9.